A 956-amino-acid polypeptide reads, in one-letter code: Thrombospondin-3 (956 aa).

Residues 1-21 form the signal peptide; sequence MEKPELWGVLALLLLCSYTCG. Residues 22–193 enclose the Laminin G-like domain; that stretch reads SQDLQVIDLL…VESMKIILGG (172 aa). 21 cysteine pairs are disulfide-bonded: cysteine 278–cysteine 289, cysteine 283–cysteine 300, cysteine 303–cysteine 314, cysteine 320–cysteine 332, cysteine 326–cysteine 341, cysteine 344–cysteine 368, cysteine 374–cysteine 388, cysteine 382–cysteine 397, cysteine 400–cysteine 412, cysteine 418–cysteine 432, cysteine 426–cysteine 442, cysteine 444–cysteine 455, cysteine 471–cysteine 478, cysteine 483–cysteine 503, cysteine 519–cysteine 539, cysteine 542–cysteine 562, cysteine 578–cysteine 598, cysteine 601–cysteine 621, cysteine 639–cysteine 659, cysteine 679–cysteine 699, and cysteine 715–cysteine 936. Residue asparagine 310 is glycosylated (N-linked (GlcNAc...) asparagine). In terms of domain architecture, EGF-like 1; calcium-binding spans 316–354; that stretch reads DINECAHADPCFPGSSCINTMPGFHCEACPPGYKGTRVS. An EGF-like 2; calcium-binding domain is found at 370 to 410; it reads DIDECNDGNNGGCDPNSICTNTVGSFKCGPCRLGFLGNQSQ. N-linked (GlcNAc...) asparagine glycosylation occurs at asparagine 407. Positions 414–456 constitute an EGF-like 3 domain; sequence PARTCHSPAHSPCHIHAHCLFERNGAVSCQCNVGWAGNGNVCG. TSP type-3 repeat units lie at residues 457–491, 492–527, 528–550, 551–586, 587–609, 610–647, 648–687, and 688–723; these read PDTD…NSGQ, EDAD…NKDQ, QNSD…NNDQ, KDTD…NPLQ, TDRD…NPTQ, TDAD…NSSQ, LDSD…NPNQ, and KDSD…EVTL. Disordered stretches follow at residues 518–537 and 546–699; these read NCRL…SFGD and PNND…GDVC. Positions 555–568 are enriched in acidic residues; that stretch reads GNGEGDACDNDVDG. Residues 612–628 are compositionally biased toward acidic residues; the sequence is ADSDLVGDVCDTNEDSD. A glycan (N-linked (GlcNAc...) asparagine) is linked at asparagine 644. Residues 650–667 show a composition bias toward acidic residues; that stretch reads SDNDGLGDECDGDDDNDG. In terms of domain architecture, TSP C-terminal spans 727-941; that stretch reads RAYQTVILDP…LQYRCNDTVP (215 aa). Asparagine 937 carries an N-linked (GlcNAc...) asparagine glycan.

The protein belongs to the thrombospondin family. As to quaternary structure, oligomer; disulfide-linked. Brain, lung and cartilage.

Functionally, adhesive glycoprotein that mediates cell-to-cell and cell-to-matrix interactions. Can bind to fibrinogen, fibronectin, laminin and type V collagen. The chain is Thrombospondin-3 (Thbs3) from Mus musculus (Mouse).